A 469-amino-acid polypeptide reads, in one-letter code: MNPNQKIITIGSVSLTIATICFLMQIAILVTTVTLHFKQYECSSPPNNQVIPCQPTIIERNITEIVYLTNTTIEKEICPKLVEYRNWSKPQCKITGFAPFSKDNSIRLSAGGDIWVTREPYVSCDPGKCYQFALGQGTTLNNRHSNDTVHDRTPYRTLLMNELGVPFHLGTKQVCIAWSSSSCHDGKAWLHVCVTGHDENATASFIYDGRLVDSIGSWSKNILRTQESECVCINGTCTVVMTDGSASERADTKILFIEEGKVVHISPLSGSAQHVEECSCYPRYPGVRCVCRDNWKGSNRPIVDINVKDYSIVSSYVCSGLVGDTPRKNDSSSSSYCQNPNNEKGSHGVKGWAFDDGNDVWMGRTISEELRSGYETFKVIGGWSTPNSKLQINRQVIVDSGNRSGYSGIFSVEGKSCINRCFYVELIRGRKQETKVWWTSNSIVVFCGTSGTYGTGSWPDGADINLMPI.

Topologically, residues M1–T9 are intravirion. The helical transmembrane segment at I10 to V30 threads the bilayer. An involved in apical transport and lipid raft association region spans residues G11 to V33. Residues T31–I469 lie on the Virion surface side of the membrane. The interval H36–S88 is hypervariable stalk region. Residues N61, N70, and N86 are each glycosylated (N-linked (GlcNAc...) asparagine; by host). The head of neuraminidase stretch occupies residues Q91–I469. 8 disulfide bridges follow: C92/C417, C124/C129, C183/C230, C232/C237, C278/C291, C280/C289, C318/C337, and C421/C447. R118 is a substrate binding site. N146 is a glycosylation site (N-linked (GlcNAc...) asparagine; by host). Residue D151 is the Proton donor/acceptor of the active site. R152 contacts substrate. 2 N-linked (GlcNAc...) asparagine; by host glycosylation sites follow: N200 and N234. A substrate-binding site is contributed by E276 to E277. Position 292 (R292) interacts with substrate. Ca(2+)-binding residues include D293, G297, and D324. Residues P326 to K350 form a disordered region. N329 carries N-linked (GlcNAc...) asparagine; by host glycosylation. Residues S331–E343 show a composition bias toward polar residues. Residue R371 coordinates substrate. N402 carries an N-linked (GlcNAc...) asparagine; by host glycan. Y406 functions as the Nucleophile in the catalytic mechanism.

It belongs to the glycosyl hydrolase 34 family. As to quaternary structure, homotetramer. The cofactor is Ca(2+). N-glycosylated.

It is found in the virion membrane. The protein localises to the host apical cell membrane. It carries out the reaction Hydrolysis of alpha-(2-&gt;3)-, alpha-(2-&gt;6)-, alpha-(2-&gt;8)- glycosidic linkages of terminal sialic acid residues in oligosaccharides, glycoproteins, glycolipids, colominic acid and synthetic substrates.. Its activity is regulated as follows. Inhibited by the neuraminidase inhibitors zanamivir (Relenza) and oseltamivir (Tamiflu). These drugs interfere with the release of progeny virus from infected cells and are effective against all influenza strains. Resistance to neuraminidase inhibitors is quite rare. In terms of biological role, catalyzes the removal of terminal sialic acid residues from viral and cellular glycoconjugates. Cleaves off the terminal sialic acids on the glycosylated HA during virus budding to facilitate virus release. Additionally helps virus spread through the circulation by further removing sialic acids from the cell surface. These cleavages prevent self-aggregation and ensure the efficient spread of the progeny virus from cell to cell. Otherwise, infection would be limited to one round of replication. Described as a receptor-destroying enzyme because it cleaves a terminal sialic acid from the cellular receptors. May facilitate viral invasion of the upper airways by cleaving the sialic acid moieties on the mucin of the airway epithelial cells. Likely to plays a role in the budding process through its association with lipid rafts during intracellular transport. May additionally display a raft-association independent effect on budding. Plays a role in the determination of host range restriction on replication and virulence. Sialidase activity in late endosome/lysosome traffic seems to enhance virus replication. In Influenza A virus (strain A/Kitakyushu/159/1993 H3N2), this protein is Neuraminidase.